The primary structure comprises 120 residues: Large ribosomal subunit protein bL20c (120 aa).

It belongs to the bacterial ribosomal protein bL20 family.

The protein localises to the plastid. Its function is as follows. Binds directly to 23S ribosomal RNA and is necessary for the in vitro assembly process of the 50S ribosomal subunit. It is not involved in the protein synthesizing functions of that subunit. The protein is Large ribosomal subunit protein bL20c of Cuscuta obtusiflora (Peruvian dodder).